A 306-amino-acid chain; its full sequence is MAELIPLNEVGVAQPASGAVNRPRRPEWLKARAPGGVNYHDVLRLMREKNLHTVCEEARCPNIGECWNHRTATFLLLGDICTRGCRYCAIGKGKPKPIDENEPERVAESVAHLKLKFAVLTSVNRDDVPDGGAHIFARTIELIRQKVPDCKVEVLIPDFDGNWDALATVLAAEPDVLNHNIETVPRLFRRFRPRAKFEQSIELLARARAARPKLVTKSGMMVGAGETNEEVYEVIDRLRSVDVNVLTIGQYLAPDASYWPVHRYVTPAEFAEFRSYALARGFTHVESGPLVRSSYNAHLHVGAAQH.

[4Fe-4S] cluster-binding residues include Cys55, Cys60, Cys66, Cys81, Cys85, Cys88, and Ser294. The Radical SAM core domain occupies 67–283; sequence WNHRTATFLL…RSYALARGFT (217 aa).

The protein belongs to the radical SAM superfamily. Lipoyl synthase family. [4Fe-4S] cluster serves as cofactor.

It is found in the cytoplasm. The catalysed reaction is [[Fe-S] cluster scaffold protein carrying a second [4Fe-4S](2+) cluster] + N(6)-octanoyl-L-lysyl-[protein] + 2 oxidized [2Fe-2S]-[ferredoxin] + 2 S-adenosyl-L-methionine + 4 H(+) = [[Fe-S] cluster scaffold protein] + N(6)-[(R)-dihydrolipoyl]-L-lysyl-[protein] + 4 Fe(3+) + 2 hydrogen sulfide + 2 5'-deoxyadenosine + 2 L-methionine + 2 reduced [2Fe-2S]-[ferredoxin]. Its pathway is protein modification; protein lipoylation via endogenous pathway; protein N(6)-(lipoyl)lysine from octanoyl-[acyl-carrier-protein]: step 2/2. In terms of biological role, catalyzes the radical-mediated insertion of two sulfur atoms into the C-6 and C-8 positions of the octanoyl moiety bound to the lipoyl domains of lipoate-dependent enzymes, thereby converting the octanoylated domains into lipoylated derivatives. This chain is Lipoyl synthase, found in Chloroflexus aurantiacus (strain ATCC 29364 / DSM 637 / Y-400-fl).